The primary structure comprises 851 residues: DNA mismatch repair protein MutS (851 aa).

614-621 is an ATP binding site; sequence GPNMGGKS.

Belongs to the DNA mismatch repair MutS family.

Functionally, this protein is involved in the repair of mismatches in DNA. It is possible that it carries out the mismatch recognition step. This protein has a weak ATPase activity. The sequence is that of DNA mismatch repair protein MutS from Yersinia pestis.